An 80-amino-acid chain; its full sequence is MKYPLVPLVSDLTLSFLVFWLCLPVALLLFLTIVWLHFLLSQESKEDDSDLCFNWEPWSKRPSECGCEETFPGEEDGLHW.

Residues 16-36 (FLVFWLCLPVALLLFLTIVWL) traverse the membrane as a helical segment. At S63 the chain carries Phosphoserine.

This sequence belongs to the adipogenin family. In terms of tissue distribution, selectively expressed in adipose tissue where it is particularly enriched in brown adipose tissue. In adipose tissue, expressed exclusively in adipocytes and not in the stromal-vascular cell population. Expressed at much lower levels in heart, stomach and muscle and barely detected in kidney and lung.

It is found in the membrane. The protein resides in the nucleus. Functionally, plays a role in stimulating adipocyte differentiation and development. The polypeptide is Adipogenin (Adig) (Mus musculus (Mouse)).